Reading from the N-terminus, the 178-residue chain is NADH-ubiquinone oxidoreductase chain 6 (178 aa).

5 helical membrane passes run 1–21 (MMTYIVTILSTIFVVSFVGFS), 25–45 (SPIYGGVGLIVSGGVGCGIVL), 48–68 (GGSFLGLMVFLIYLGGMLVVF), 89–109 (VLLTFLLGLVGEVVLMIYLLL), and 152–172 (YGYWLVIVSGWSLVTCIIVVM).

This sequence belongs to the complex I subunit 6 family.

Its subcellular location is the mitochondrion membrane. The catalysed reaction is a ubiquinone + NADH + 5 H(+)(in) = a ubiquinol + NAD(+) + 4 H(+)(out). Functionally, core subunit of the mitochondrial membrane respiratory chain NADH dehydrogenase (Complex I) that is believed to belong to the minimal assembly required for catalysis. Complex I functions in the transfer of electrons from NADH to the respiratory chain. The immediate electron acceptor for the enzyme is believed to be ubiquinone. This is NADH-ubiquinone oxidoreductase chain 6 (MT-ND6) from Pseudosoriculus fumidus (Taiwanese brown-toothed shrew).